Reading from the N-terminus, the 406-residue chain is Argininosuccinate synthase (406 aa).

ATP contacts are provided by residues 10 to 18 (AYSGGLDTS) and alanine 37. Tyrosine 88 and serine 93 together coordinate L-citrulline. Glycine 118 contacts ATP. Positions 120, 124, and 125 each coordinate L-aspartate. Asparagine 124 is a binding site for L-citrulline. L-citrulline-binding residues include arginine 128, serine 179, serine 188, glutamate 264, and tyrosine 276.

Belongs to the argininosuccinate synthase family. Type 1 subfamily. In terms of assembly, homotetramer.

It is found in the cytoplasm. It catalyses the reaction L-citrulline + L-aspartate + ATP = 2-(N(omega)-L-arginino)succinate + AMP + diphosphate + H(+). Its pathway is amino-acid biosynthesis; L-arginine biosynthesis; L-arginine from L-ornithine and carbamoyl phosphate: step 2/3. The polypeptide is Argininosuccinate synthase (Dinoroseobacter shibae (strain DSM 16493 / NCIMB 14021 / DFL 12)).